The sequence spans 228 residues: Ribonuclease 3 (228 aa).

The RNase III domain maps to 5 to 127 (LMALQARLQH…VIGAVYLDAG (123 aa)). Glu40 serves as a coordination point for Mg(2+). The active site involves Asp44. Mg(2+) is bound by residues Asp113 and Glu116. Glu116 is a catalytic residue. A DRBM domain is found at 154–224 (DPKTELQEWL…AAAMLQTLKA (71 aa)).

The protein belongs to the ribonuclease III family. Homodimer. Mg(2+) serves as cofactor.

It is found in the cytoplasm. It catalyses the reaction Endonucleolytic cleavage to 5'-phosphomonoester.. Functionally, digests double-stranded RNA. Involved in the processing of primary rRNA transcript to yield the immediate precursors to the large and small rRNAs (23S and 16S). Processes some mRNAs, and tRNAs when they are encoded in the rRNA operon. Processes pre-crRNA and tracrRNA of type II CRISPR loci if present in the organism. The polypeptide is Ribonuclease 3 (Albidiferax ferrireducens (strain ATCC BAA-621 / DSM 15236 / T118) (Rhodoferax ferrireducens)).